Consider the following 37-residue polypeptide: Mu-agatoxin-Aa1f (37 aa).

4 disulfide bridges follow: C2–C18, C9–C23, C17–C33, and C25–C31. N37 carries the post-translational modification Asparagine amide.

This sequence belongs to the neurotoxin 07 (Beta/delta-agtx) family. 03 (aga-4) subfamily. Aga sub-subfamily. In terms of tissue distribution, expressed by the venom gland.

The protein localises to the secreted. In terms of biological role, insecticidal neurotoxin that induces an irreversible spastic paralysis when injected into insects. Modifies presynaptic voltage-gated sodium channels (Nav), causing them to open at the normal resting potential of the nerve. This leads to spontaneous release of neurotransmitter and repetitive action potentials in motor neurons. The protein is Mu-agatoxin-Aa1f of Agelenopsis aperta (North American funnel-web spider).